The primary structure comprises 302 residues: Urease accessory protein UreG (302 aa).

Basic and acidic residues-rich tracts occupy residues 1-32 (MHDP…DHVH), 40-56 (HEHE…EHGH), and 64-76 (HAHE…THEH). Residues 1–76 (MHDPGEHGHG…EHAHGHTHEH (76 aa)) form a disordered region. 105 to 112 (GPVGSGKT) serves as a coordination point for GTP.

This sequence belongs to the SIMIBI class G3E GTPase family. UreG subfamily. In terms of assembly, homodimer. UreD, UreF and UreG form a complex that acts as a GTP-hydrolysis-dependent molecular chaperone, activating the urease apoprotein by helping to assemble the nickel containing metallocenter of UreC. The UreE protein probably delivers the nickel.

It is found in the cytoplasm. Facilitates the functional incorporation of the urease nickel metallocenter. This process requires GTP hydrolysis, probably effectuated by UreG. The sequence is that of Urease accessory protein UreG from Sorangium cellulosum (strain So ce56) (Polyangium cellulosum (strain So ce56)).